A 462-amino-acid polypeptide reads, in one-letter code: Chromosomal replication initiator protein DnaA (462 aa).

The domain I, interacts with DnaA modulators stretch occupies residues 1–83 (MSLSLWQQCL…LRFEVGSKPA (83 aa)). Residues 83–125 (AVRAHSHPVTASVSAPVAPVTRSAPVRPSWDSSPAQPELSYRS) are domain II. The interval 105–127 (SAPVRPSWDSSPAQPELSYRSNV) is disordered. The span at 112–127 (WDSSPAQPELSYRSNV) shows a compositional bias: polar residues. The interval 126-342 (NVNPKHTFDN…GALNRVIANA (217 aa)) is domain III, AAA+ region. ATP contacts are provided by G170, G172, K173, and T174. The domain IV, binds dsDNA stretch occupies residues 343–462 (NFTGRAITID…FSNLIRTLSS (120 aa)).

This sequence belongs to the DnaA family. In terms of assembly, oligomerizes as a right-handed, spiral filament on DNA at oriC.

Its subcellular location is the cytoplasm. Plays an essential role in the initiation and regulation of chromosomal replication. ATP-DnaA binds to the origin of replication (oriC) to initiate formation of the DNA replication initiation complex once per cell cycle. Binds the DnaA box (a 9 base pair repeat at the origin) and separates the double-stranded (ds)DNA. Forms a right-handed helical filament on oriC DNA; dsDNA binds to the exterior of the filament while single-stranded (ss)DNA is stabiized in the filament's interior. The ATP-DnaA-oriC complex binds and stabilizes one strand of the AT-rich DNA unwinding element (DUE), permitting loading of DNA polymerase. After initiation quickly degrades to an ADP-DnaA complex that is not apt for DNA replication. Binds acidic phospholipids. The sequence is that of Chromosomal replication initiator protein DnaA from Yersinia enterocolitica serotype O:8 / biotype 1B (strain NCTC 13174 / 8081).